Consider the following 278-residue polypeptide: Tryptophan synthase alpha chain (278 aa).

Catalysis depends on proton acceptor residues E50 and D61.

The protein belongs to the TrpA family. Tetramer of two alpha and two beta chains.

It catalyses the reaction (1S,2R)-1-C-(indol-3-yl)glycerol 3-phosphate + L-serine = D-glyceraldehyde 3-phosphate + L-tryptophan + H2O. It participates in amino-acid biosynthesis; L-tryptophan biosynthesis; L-tryptophan from chorismate: step 5/5. The alpha subunit is responsible for the aldol cleavage of indoleglycerol phosphate to indole and glyceraldehyde 3-phosphate. The polypeptide is Tryptophan synthase alpha chain (Rhodopseudomonas palustris (strain TIE-1)).